Here is a 171-residue protein sequence, read N- to C-terminus: S-ribosylhomocysteine lyase (171 aa).

Fe cation-binding residues include H54, H58, and C128.

The protein belongs to the LuxS family. As to quaternary structure, homodimer. Fe cation serves as cofactor.

It carries out the reaction S-(5-deoxy-D-ribos-5-yl)-L-homocysteine = (S)-4,5-dihydroxypentane-2,3-dione + L-homocysteine. Involved in the synthesis of autoinducer 2 (AI-2) which is secreted by bacteria and is used to communicate both the cell density and the metabolic potential of the environment. The regulation of gene expression in response to changes in cell density is called quorum sensing. Catalyzes the transformation of S-ribosylhomocysteine (RHC) to homocysteine (HC) and 4,5-dihydroxy-2,3-pentadione (DPD). This is S-ribosylhomocysteine lyase from Shigella flexneri.